Reading from the N-terminus, the 564-residue chain is Adenine deaminase (564 aa).

The protein belongs to the metallo-dependent hydrolases superfamily. Adenine deaminase family. The cofactor is Mn(2+).

It catalyses the reaction adenine + H2O + H(+) = hypoxanthine + NH4(+). This Deinococcus geothermalis (strain DSM 11300 / CIP 105573 / AG-3a) protein is Adenine deaminase.